The sequence spans 588 residues: Calcium/calmodulin-dependent protein kinase kinase 2 (588 aa).

A compositionally biased stretch (polar residues) spans 1 to 14; the sequence is MSSCVSSQPSSNRA. Disordered regions lie at residues 1–33 and 78–100; these read MSSCVSSQPSSNRAAPQDELGGRGSSSSESQKP and GQEVPLDTSGSQARPHLSGRKLS. Ser-2 carries the N-acetylserine modification. Ser-100, Ser-114, Ser-129, Ser-133, and Ser-137 each carry phosphoserine. Residues 128-139 are compositionally biased toward low complexity; it reads YSPVSSPQSSPR. The segment at 128 to 149 is disordered; it reads YSPVSSPQSSPRLPRRPTVESH. In terms of domain architecture, Protein kinase spans 165 to 446; sequence YTLKDEIGKG…VPEIKLHPWV (282 aa). Residues 171–179 and Lys-194 contribute to the ATP site; that span reads IGKGSYGVV. The tract at residues 204-226 is RP domain; sequence QAGFPRRPPPRGTRPAPGGCIQP. The interval 205–225 is disordered; sequence AGFPRRPPPRGTRPAPGGCIQ. The active-site Proton acceptor is Asp-312. The interval 472 to 477 is autoinhibitory domain; the sequence is ENSVKH. Residues 475 to 500 are calmodulin-binding; the sequence is VKHIPSLATVILVKTMIRKRSFGNPF. Phosphoserine is present on residues Pro-479, Ser-495, Ser-511, Thr-522, and Ser-572. The tract at residues 497-588 is disordered; sequence GNPFEGSRRE…LRPEEAMEPE (92 aa). Positions 521–536 are enriched in basic and acidic residues; the sequence is PTRECESLSELKEARQ. Over residues 579 to 588 the composition is skewed to basic and acidic residues; the sequence is LRPEEAMEPE.

This sequence belongs to the protein kinase superfamily. Ser/Thr protein kinase family. As to quaternary structure, interacts with calmodulin. In terms of processing, autophosphorylated and phosphorylated by PKA. Each isoform may show a different pattern of phosphorylation. As to expression, ubiquitously expressed with higher levels in the brain. Intermediate levels are detected in spleen, prostate, thyroid and leukocytes. The lowest level is in lung.

It localises to the nucleus. Its subcellular location is the cytoplasm. The protein resides in the cell projection. The protein localises to the neuron projection. It carries out the reaction L-seryl-[protein] + ATP = O-phospho-L-seryl-[protein] + ADP + H(+). It catalyses the reaction L-threonyl-[protein] + ATP = O-phospho-L-threonyl-[protein] + ADP + H(+). With respect to regulation, activated by Ca(2+)/calmodulin. Binding of calmodulin may relieve intrasteric autoinhibition. Autophosphorylation does not alter activity or regulation by Ca(2+)/calmodulin. In part, activity is independent on Ca(2+)/calmodulin. Its function is as follows. Calcium/calmodulin-dependent protein kinase belonging to a proposed calcium-triggered signaling cascade involved in a number of cellular processes. Isoform 1, isoform 2 and isoform 3 phosphorylate CAMK1 and CAMK4. Isoform 3 phosphorylates CAMK1D. Isoform 4, isoform 5 and isoform 6 lacking part of the calmodulin-binding domain are inactive. Efficiently phosphorylates 5'-AMP-activated protein kinase (AMPK) trimer, including that consisting of PRKAA1, PRKAB1 and PRKAG1. This phosphorylation is stimulated in response to Ca(2+) signals. Seems to be involved in hippocampal activation of CREB1. May play a role in neurite growth. Isoform 3 may promote neurite elongation, while isoform 1 may promoter neurite branching. This chain is Calcium/calmodulin-dependent protein kinase kinase 2 (CAMKK2), found in Homo sapiens (Human).